The chain runs to 105 residues: Integration host factor (105 aa).

The H2TH motif, binds DNA motif lies at 64-71 (LPKVGKVK). The interval 82–94 (APTRRLRGLGDRQ) is lid, binds DNA.

This sequence belongs to the actinobacterial IHF (aIHF) family. As to quaternary structure, binds DNA as a monomer. In terms of assembly, (Microbial infection) Forms a complex with L5 Int and attP DNA. The complex binds attB to form products.

The protein localises to the cytoplasm. The protein resides in the nucleoid. In terms of biological role, a nucleoid-associated protein (NAP) that binds DNA without any sequence specificity. Compacts DNA. Binds along the whole chromosome in a dynamic manner, has equal affinity for the oriC site, attB and a randon 62% GC-rich sequence. Plays a role in transcription regulation. (Microbial infection) Stimulates temperate Mycobacterium phage L5 Int-mediated recombination in vitro using supercoiled attP (phage attachment site) DNA, linear attB DNA (bacterial attachment site) and L5 integrase (L5 Int or Int-L5, AC P22884). mIHF acts on L5 Int to stimulate formation of a specific intasome complex. mIHF probably stabilizes a sharp bend in the DNA during phage integration. The chain is Integration host factor from Mycolicibacterium smegmatis (strain ATCC 700084 / mc(2)155) (Mycobacterium smegmatis).